A 458-amino-acid chain; its full sequence is D-inositol 3-phosphate glycosyltransferase (458 aa).

A disordered region spans residues 1-29 (MRADRPGHRSRGINPGPGMFTLVGPDERD). His47 is a binding site for 1D-myo-inositol 3-phosphate. UDP-N-acetyl-alpha-D-glucosamine contacts are provided by residues 53–54 (QP) and Gly61. 1D-myo-inositol 3-phosphate contacts are provided by residues 58-63 (DAGGMN), Lys116, Tyr149, Thr173, and Arg193. UDP-N-acetyl-alpha-D-glucosamine is bound by residues Arg267, Lys272, and Val339. Residue Ala351 participates in Mg(2+) binding. Positions 361 and 369 each coordinate UDP-N-acetyl-alpha-D-glucosamine. Residue Thr375 participates in Mg(2+) binding.

This sequence belongs to the glycosyltransferase group 1 family. MshA subfamily. Homodimer.

It carries out the reaction 1D-myo-inositol 3-phosphate + UDP-N-acetyl-alpha-D-glucosamine = 1D-myo-inositol 2-acetamido-2-deoxy-alpha-D-glucopyranoside 3-phosphate + UDP + H(+). In terms of biological role, catalyzes the transfer of a N-acetyl-glucosamine moiety to 1D-myo-inositol 3-phosphate to produce 1D-myo-inositol 2-acetamido-2-deoxy-glucopyranoside 3-phosphate in the mycothiol biosynthesis pathway. This Nocardioides sp. (strain ATCC BAA-499 / JS614) protein is D-inositol 3-phosphate glycosyltransferase.